The chain runs to 335 residues: Biotin synthase (335 aa).

Positions 47-276 (FYGKKVKLNM…SKEIRISGGR (230 aa)) constitute a Radical SAM core domain. [4Fe-4S] cluster contacts are provided by Cys-65, Cys-69, and Cys-72. [2Fe-2S] cluster is bound by residues Cys-109, Cys-141, Cys-201, and Arg-271.

The protein belongs to the radical SAM superfamily. Biotin synthase family. As to quaternary structure, homodimer. It depends on [4Fe-4S] cluster as a cofactor. [2Fe-2S] cluster serves as cofactor.

The catalysed reaction is (4R,5S)-dethiobiotin + (sulfur carrier)-SH + 2 reduced [2Fe-2S]-[ferredoxin] + 2 S-adenosyl-L-methionine = (sulfur carrier)-H + biotin + 2 5'-deoxyadenosine + 2 L-methionine + 2 oxidized [2Fe-2S]-[ferredoxin]. The protein operates within cofactor biosynthesis; biotin biosynthesis; biotin from 7,8-diaminononanoate: step 2/2. Functionally, catalyzes the conversion of dethiobiotin (DTB) to biotin by the insertion of a sulfur atom into dethiobiotin via a radical-based mechanism. This Bacillus subtilis (strain 168) protein is Biotin synthase.